The primary structure comprises 409 residues: Microfibrillar-associated protein 3-like (409 aa).

Residues 1–28 (MGLQKSHLTVCLPPSVPFLILVSTLATA) form the signal peptide. The Extracellular segment spans residues 29-148 (KSVTNSTLNG…TLRVIFTSGD (120 aa)). Residues Asn33, Asn37, Asn67, Asn111, and Asn135 are each glycosylated (N-linked (GlcNAc...) asparagine). The region spanning 47–141 (PVIIARTDHI…GTINNTVTLR (95 aa)) is the Ig-like C2-type domain. The cysteines at positions 68 and 125 are disulfide-linked. The helical transmembrane segment at 149-169 (MGVYYMVVCLVAFTIVMILNI) threads the bilayer. Topologically, residues 170–409 (TRLCMMSSHL…NTCIIYESHV (240 aa)) are cytoplasmic. Tyr287 is modified (phosphotyrosine). Ser298, Ser303, Ser306, and Ser307 each carry phosphoserine. A disordered region spans residues 319–395 (VSVHPQSKRD…AHLETTEPAV (77 aa)). Residues 325–340 (SKRDHVDDQEGGHFEV) show a composition bias toward basic and acidic residues. Residues 356-373 (TAEPSTDITTTELTSEET) are compositionally biased toward low complexity.

It is found in the cell membrane. The protein localises to the nucleus. It localises to the cytoplasm. May participate in the nuclear signaling of EGFR and MAPK1/ERK2. The sequence is that of Microfibrillar-associated protein 3-like (Mfap3l) from Mus musculus (Mouse).